The chain runs to 173 residues: Inorganic pyrophosphatase (173 aa).

Substrate is bound by residues Lys28, Arg42, and Tyr54. Mg(2+) contacts are provided by Asp64, Asp69, and Asp101. Tyr140 lines the substrate pocket.

It belongs to the PPase family. As to quaternary structure, homohexamer. Mg(2+) serves as cofactor.

Its subcellular location is the cytoplasm. The enzyme catalyses diphosphate + H2O = 2 phosphate + H(+). In terms of biological role, catalyzes the hydrolysis of inorganic pyrophosphate (PPi) forming two phosphate ions. The sequence is that of Inorganic pyrophosphatase from Helicobacter pylori (strain ATCC 700392 / 26695) (Campylobacter pylori).